A 117-amino-acid polypeptide reads, in one-letter code: Large ribosomal subunit protein uL23 (117 aa).

This sequence belongs to the universal ribosomal protein uL23 family. In terms of assembly, part of the 50S ribosomal subunit. Contacts protein L29, and trigger factor when it is bound to the ribosome.

Functionally, one of the early assembly proteins it binds 23S rRNA. One of the proteins that surrounds the polypeptide exit tunnel on the outside of the ribosome. Forms the main docking site for trigger factor binding to the ribosome. The protein is Large ribosomal subunit protein uL23 of Acetivibrio thermocellus (strain ATCC 27405 / DSM 1237 / JCM 9322 / NBRC 103400 / NCIMB 10682 / NRRL B-4536 / VPI 7372) (Clostridium thermocellum).